A 295-amino-acid chain; its full sequence is Glycine--tRNA ligase alpha subunit (295 aa).

This sequence belongs to the class-II aminoacyl-tRNA synthetase family. In terms of assembly, tetramer of two alpha and two beta subunits.

The protein localises to the cytoplasm. It carries out the reaction tRNA(Gly) + glycine + ATP = glycyl-tRNA(Gly) + AMP + diphosphate. The polypeptide is Glycine--tRNA ligase alpha subunit (Thermosynechococcus vestitus (strain NIES-2133 / IAM M-273 / BP-1)).